The primary structure comprises 540 residues: Glucose-6-phosphate isomerase (540 aa).

Glu-346 (proton donor) is an active-site residue. Active-site residues include His-377 and Lys-505.

The protein belongs to the GPI family.

The protein localises to the cytoplasm. It carries out the reaction alpha-D-glucose 6-phosphate = beta-D-fructose 6-phosphate. It functions in the pathway carbohydrate biosynthesis; gluconeogenesis. Its pathway is carbohydrate degradation; glycolysis; D-glyceraldehyde 3-phosphate and glycerone phosphate from D-glucose: step 2/4. Functionally, catalyzes the reversible isomerization of glucose-6-phosphate to fructose-6-phosphate. The sequence is that of Glucose-6-phosphate isomerase from Francisella tularensis subsp. tularensis (strain SCHU S4 / Schu 4).